Consider the following 88-residue polypeptide: Cell division topological specificity factor (88 aa).

The protein belongs to the MinE family.

Its function is as follows. Prevents the cell division inhibition by proteins MinC and MinD at internal division sites while permitting inhibition at polar sites. This ensures cell division at the proper site by restricting the formation of a division septum at the midpoint of the long axis of the cell. The chain is Cell division topological specificity factor from Aromatoleum aromaticum (strain DSM 19018 / LMG 30748 / EbN1) (Azoarcus sp. (strain EbN1)).